A 392-amino-acid chain; its full sequence is Copper-containing nitrite reductase (392 aa).

The first 18 residues, 1–18 (MKRQALAAMIASLFALAA), serve as a signal peptide directing secretion. Residue cysteine 19 is the site of N-palmitoyl cysteine attachment. Cysteine 19 is lipidated: S-diacylglycerol cysteine. A disordered region spans residues 30–49 (ETPAASAEAASSAAQATAET). Plastocyanin-like domains follow at residues 101–195 (WTFD…ILVE) and 245–346 (GHVG…LKVE). The Cu cation site is built by histidine 134, histidine 139, histidine 174, cysteine 175, histidine 183, and methionine 188. Histidine 139 contributes to the substrate binding site. A substrate-binding site is contributed by histidine 280. Histidine 329 lines the Cu cation pocket. A disordered region spans residues 367-392 (GAASAPAASAPAASAPAASASEKSVY). Tandem repeats lie at residues 368 to 372 (AASAP), 373 to 377 (AASAP), 378 to 382 (AASAP), and 383 to 387 (AASAS). A 4 X 5 AA tandem repeats of A-A-S-A-P region spans residues 368 to 387 (AASAPAASAPAASAPAASAS).

This sequence belongs to the multicopper oxidase family. Homotrimer. It depends on Cu(+) as a cofactor. The cofactor is Cu(2+). Palmitoylated.

The protein localises to the cell outer membrane. The enzyme catalyses nitric oxide + Fe(III)-[cytochrome c] + H2O = Fe(II)-[cytochrome c] + nitrite + 2 H(+). Catalyzes the reduction of nitrite to nitric oxide (NO), probably with azurin as electron donor. Essential for growth and survival in oxygen-depleted environments. Can also provide protection against killing by normal human sera. The chain is Copper-containing nitrite reductase (aniA) from Neisseria gonorrhoeae.